Consider the following 165-residue polypeptide: 2-C-methyl-D-erythritol 2,4-cyclodiphosphate synthase (165 aa).

Residues Asp11 and His13 each coordinate a divalent metal cation. Residues 11-13 and 40-41 contribute to the 4-CDP-2-C-methyl-D-erythritol 2-phosphate site; these read DVH and HS. His48 contributes to the a divalent metal cation binding site. 4-CDP-2-C-methyl-D-erythritol 2-phosphate is bound by residues 62–64, 67–71, 137–140, Phe144, and Arg147; these read DIG, FPDTD, and TTSE.

This sequence belongs to the IspF family. In terms of assembly, homotrimer. Requires a divalent metal cation as cofactor.

The catalysed reaction is 4-CDP-2-C-methyl-D-erythritol 2-phosphate = 2-C-methyl-D-erythritol 2,4-cyclic diphosphate + CMP. It participates in isoprenoid biosynthesis; isopentenyl diphosphate biosynthesis via DXP pathway; isopentenyl diphosphate from 1-deoxy-D-xylulose 5-phosphate: step 4/6. In terms of biological role, involved in the biosynthesis of isopentenyl diphosphate (IPP) and dimethylallyl diphosphate (DMAPP), two major building blocks of isoprenoid compounds. Catalyzes the conversion of 4-diphosphocytidyl-2-C-methyl-D-erythritol 2-phosphate (CDP-ME2P) to 2-C-methyl-D-erythritol 2,4-cyclodiphosphate (ME-CPP) with a corresponding release of cytidine 5-monophosphate (CMP). The polypeptide is 2-C-methyl-D-erythritol 2,4-cyclodiphosphate synthase (Rubrobacter xylanophilus (strain DSM 9941 / JCM 11954 / NBRC 16129 / PRD-1)).